We begin with the raw amino-acid sequence, 399 residues long: Pyridinium-3,5-bisthiocarboxylic acid mononucleotide nickel insertion protein (399 aa).

The protein belongs to the LarC family.

The catalysed reaction is Ni(II)-pyridinium-3,5-bisthiocarboxylate mononucleotide = pyridinium-3,5-bisthiocarboxylate mononucleotide + Ni(2+). In terms of biological role, involved in the biosynthesis of a nickel-pincer cofactor ((SCS)Ni(II) pincer complex). Binds Ni(2+), and functions in nickel delivery to pyridinium-3,5-bisthiocarboxylic acid mononucleotide (P2TMN), to form the mature cofactor. Is thus probably required for the activation of nickel-pincer cofactor-dependent enzymes. The polypeptide is Pyridinium-3,5-bisthiocarboxylic acid mononucleotide nickel insertion protein (Clostridium kluyveri (strain ATCC 8527 / DSM 555 / NBRC 12016 / NCIMB 10680 / K1)).